Consider the following 600-residue polypeptide: NADH-quinone oxidoreductase subunit C/D (600 aa).

The segment at 1-190 (MVNNMTDLTA…DPFELTKAKQ (190 aa)) is NADH dehydrogenase I subunit C. An NADH dehydrogenase I subunit D region spans residues 214–600 (DFMFLNLGPN…IDFVMSDVDR (387 aa)).

In the N-terminal section; belongs to the complex I 30 kDa subunit family. This sequence in the C-terminal section; belongs to the complex I 49 kDa subunit family. As to quaternary structure, NDH-1 is composed of 13 different subunits. Subunits NuoB, CD, E, F, and G constitute the peripheral sector of the complex.

It is found in the cell inner membrane. The catalysed reaction is a quinone + NADH + 5 H(+)(in) = a quinol + NAD(+) + 4 H(+)(out). NDH-1 shuttles electrons from NADH, via FMN and iron-sulfur (Fe-S) centers, to quinones in the respiratory chain. The immediate electron acceptor for the enzyme in this species is believed to be ubiquinone. Couples the redox reaction to proton translocation (for every two electrons transferred, four hydrogen ions are translocated across the cytoplasmic membrane), and thus conserves the redox energy in a proton gradient. The polypeptide is NADH-quinone oxidoreductase subunit C/D (Salmonella paratyphi A (strain ATCC 9150 / SARB42)).